The following is a 179-amino-acid chain: uncharacterized protein (179 aa).

The interval 53–82 (SPEREDPESPTRGVDEVDGACSEPPTPRPE) is disordered. Residues 54–67 (PEREDPESPTRGVD) are compositionally biased toward basic and acidic residues.

This is an uncharacterized protein from Ictaluridae (bullhead catfishes).